The following is an 879-amino-acid chain: MERMGLNEIREEYLKFFESKAHLRLPSFSLVPKNDKSLLLINAGMAPLKPYFTGLQVPPNKRVTTCQKCVRTGDIENVGKTSRHGTFFEMMGNFSFGDYFKEEVIPWAWEFTTEVLKLPKNKLYVTIYEDDDEALDIWVNKTDVDPKRIFRLGKEDNFWEHGLGPCGPCSEIHFNRGAGEVKTSEEFVKASDEDKIVEFWNLVFTQFDKDEEGNYNKLANPNIDTGMGLERMATIMQNVDTIFEVDTIKAVLDKVCKLSGANYKEDRVKDISIRIITDHIRSITFMISDGILPSNEGRGYVLRRLLRRAARHGKTLGINNTFLHNLTDIVIENCYKNYPELEEKREYIKKIIKLEEERFDETIDAGMQILNDYIKEVKNNNYKVLSGDKAFKLYDTYGFPVELTEEILEEEGISIDKEGFNKEMKEQRERARSAREETNYMGAEDTILNKIDLNINTDFEGYDKLEVKSKVAVIIKDEEFKNEIEKGNEGVIVTYNTPFYAEMGGQIGDTGIIYNDNFKAEVIDCKKNISGKILHFVKILDGKVALEDQVILKVNEGRRNNIRKNHTATHILHAALIKVVGDHVQQSGSYVDDERLRFDFSHFEAVSEDELKEVEKIVNKEIMKANAVNTKVMNIEEAKQQGAIALFDNKYKDDVRVVSVGDFSKELCGGTHVSNSGQIGMFKVVSEAGVAAGIRRIEAVTAFKAMEYVDHKNNILKEAAQILKCNEKELLNKLNHQVLEMKEKEKEIEALKLKLASGAEDEILNNIKEIKGVKVASAAVKDIDGNALRDLGDKIRDNMQSGVVVLGSNYKGKVLFVAMATKDTVAKGVHCGKIIKEVASIAGGGGGGRPDMAQAGGKDPNKLEDAIKTVETVVESLVK.

Zn(2+)-binding residues include H566, H570, C668, and H672.

The protein belongs to the class-II aminoacyl-tRNA synthetase family. The cofactor is Zn(2+).

It is found in the cytoplasm. It carries out the reaction tRNA(Ala) + L-alanine + ATP = L-alanyl-tRNA(Ala) + AMP + diphosphate. Its function is as follows. Catalyzes the attachment of alanine to tRNA(Ala) in a two-step reaction: alanine is first activated by ATP to form Ala-AMP and then transferred to the acceptor end of tRNA(Ala). Also edits incorrectly charged Ser-tRNA(Ala) and Gly-tRNA(Ala) via its editing domain. The chain is Alanine--tRNA ligase from Clostridium botulinum (strain Loch Maree / Type A3).